The primary structure comprises 545 residues: 2-succinyl-5-enolpyruvyl-6-hydroxy-3-cyclohexene-1-carboxylate synthase (545 aa).

Over residues 170–185 the composition is skewed to polar residues; sequence QVSGLQRSAPAPSSDS. The tract at residues 170 to 193 is disordered; it reads QVSGLQRSAPAPSSDSPLGAAPQL.

Belongs to the TPP enzyme family. MenD subfamily. In terms of assembly, homodimer. The cofactor is Mg(2+). Requires Mn(2+) as cofactor. Thiamine diphosphate is required as a cofactor.

It catalyses the reaction isochorismate + 2-oxoglutarate + H(+) = 5-enolpyruvoyl-6-hydroxy-2-succinyl-cyclohex-3-ene-1-carboxylate + CO2. It participates in quinol/quinone metabolism; 1,4-dihydroxy-2-naphthoate biosynthesis; 1,4-dihydroxy-2-naphthoate from chorismate: step 2/7. Its pathway is cofactor biosynthesis; phylloquinone biosynthesis. In terms of biological role, catalyzes the thiamine diphosphate-dependent decarboxylation of 2-oxoglutarate and the subsequent addition of the resulting succinic semialdehyde-thiamine pyrophosphate anion to isochorismate to yield 2-succinyl-5-enolpyruvyl-6-hydroxy-3-cyclohexene-1-carboxylate (SEPHCHC). This is 2-succinyl-5-enolpyruvyl-6-hydroxy-3-cyclohexene-1-carboxylate synthase from Parasynechococcus marenigrum (strain WH8102).